A 365-amino-acid chain; its full sequence is Alanine racemase (365 aa).

Lysine 32 functions as the Proton acceptor; specific for D-alanine in the catalytic mechanism. At lysine 32 the chain carries N6-(pyridoxal phosphate)lysine. Arginine 128 contacts substrate. Residue tyrosine 257 is the Proton acceptor; specific for L-alanine of the active site. Methionine 305 is a substrate binding site.

It belongs to the alanine racemase family. Pyridoxal 5'-phosphate serves as cofactor.

It carries out the reaction L-alanine = D-alanine. It participates in amino-acid biosynthesis; D-alanine biosynthesis; D-alanine from L-alanine: step 1/1. Functionally, catalyzes the interconversion of L-alanine and D-alanine. May also act on other amino acids. The sequence is that of Alanine racemase (alr) from Francisella tularensis subsp. tularensis (strain WY96-3418).